The chain runs to 302 residues: MTRTDQDSWDLASSVGATATMVAAARALASAEANPIIDDPFAAPLVRAVGLDFFTRLAEGEIDHDEQAQRDRQLVADSIAVRTRFFDDFFLDAARRGVRQSVILAAGLDARAYRLPWPSGSVVYEVDQPDVIDFKDTTMSALGAVPTATRRTVRVDLRDDWPAALRHNGFDTTQPTAWSAEGLLMYLPPDAQDRLFDAISGLSAPGSRLATEYHPDPGSTMAERAQQFNQRWVRLGCDIDLSGLFYEGERSNVVDYLTEHGWHVAARPRQDLFTDYGRVFPDADTSQLRSIVAVTATFGEAG.

S-adenosyl-L-methionine-binding positions include aspartate 127 and 156-157 (DL).

The protein belongs to the UPF0677 family.

Functionally, exhibits S-adenosyl-L-methionine-dependent methyltransferase activity. The chain is Putative S-adenosyl-L-methionine-dependent methyltransferase MMAR_1068 from Mycobacterium marinum (strain ATCC BAA-535 / M).